The following is a 131-amino-acid chain: Large ribosomal subunit protein bL12 (131 aa).

The protein belongs to the bacterial ribosomal protein bL12 family. Homodimer. Part of the ribosomal stalk of the 50S ribosomal subunit. Forms a multimeric L10(L12)X complex, where L10 forms an elongated spine to which 2 to 4 L12 dimers bind in a sequential fashion. Binds GTP-bound translation factors.

In terms of biological role, forms part of the ribosomal stalk which helps the ribosome interact with GTP-bound translation factors. Is thus essential for accurate translation. The sequence is that of Large ribosomal subunit protein bL12 from Prochlorococcus marinus (strain MIT 9215).